A 416-amino-acid polypeptide reads, in one-letter code: MLRRLGVRHFRRTPLLFVGGDGSIFERYTEIDNSNERRINALKGCGMFEDEWIATEKVHGANFGIYSIEGEKMIRYAKRSGIMPPNEHFFGYHILIPELQRYITSIREMLCEKQKKKLHVVLINGELFGGKYDHPSVPKTRKTVMVAGKPRTISAVQTDSFPQYSPDLHFYAFDIKYKETEDGDYTTLVYDEAIELFQRVPGLLYARAVIRGPMSKVAAFDVERFVTTIPPLVGMGNYPLTGNWAEGLVVKHSRLGMAGFDPKGPTVLKFKCTAFQEISTDRAQGPRVDEMRNVRRDSINRAGVQLPDLESIVQDPIQLEASKLLLNHVCENRLKNVLSKIGTEPFEKEEMTPDQLATLLAKDVLKDFLKDTEPSIVNIPVLIRKDLTRYVIFESRRLVCSQWKDILKRQSPDFSE.

Residues 1–17 constitute a mitochondrion transit peptide; sequence MLRRLGVRHFRRTPLLF. ATP-binding positions include 29–31, 56–62, Arg-79, Glu-126, Phe-173, and 269–271; these read TEI, EKVHGAN, and KFK. Lys-57 serves as the catalytic N6-AMP-lysine intermediate.

The protein belongs to the RNA ligase 2 family. Component of the RNA editing complex, a 1600 kDa complex composed of at least 20 proteins.

The protein localises to the mitochondrion. It catalyses the reaction ATP + (ribonucleotide)n-3'-hydroxyl + 5'-phospho-(ribonucleotide)m = (ribonucleotide)n+m + AMP + diphosphate.. RNA editing in kinetoplastid mitochondria inserts and deletes uridylates at multiple sites in pre-mRNAs as directed by guide RNAs. This is RNA-editing ligase 2, mitochondrial (REL2) from Trypanosoma brucei brucei (strain 927/4 GUTat10.1).